Here is a 329-residue protein sequence, read N- to C-terminus: Peroxidase 56 (329 aa).

The N-terminal stretch at 1-31 (MAALKMTISCFLFLQVIYCLLSSFAPTNVQG) is a signal peptide. 4 disulfides stabilise this stretch: C41–C119, C74–C79, C125–C325, and C204–C236. H72 functions as the Proton acceptor in the catalytic mechanism. 5 residues coordinate Ca(2+): D73, V76, G78, E80, and S82. An N-linked (GlcNAc...) asparagine glycan is attached at N158. P167 is a binding site for substrate. N-linked (GlcNAc...) asparagine glycosylation is present at N172. Residue H197 participates in heme b binding. T198 contacts Ca(2+). N213 carries an N-linked (GlcNAc...) asparagine glycan. The Ca(2+) site is built by D248, S251, and D256.

Belongs to the peroxidase family. Classical plant (class III) peroxidase subfamily. It depends on heme b as a cofactor. The cofactor is Ca(2+).

The protein localises to the secreted. The catalysed reaction is 2 a phenolic donor + H2O2 = 2 a phenolic radical donor + 2 H2O. Its function is as follows. Removal of H(2)O(2), oxidation of toxic reductants, biosynthesis and degradation of lignin, suberization, auxin catabolism, response to environmental stresses such as wounding, pathogen attack and oxidative stress. These functions might be dependent on each isozyme/isoform in each plant tissue. In Arabidopsis thaliana (Mouse-ear cress), this protein is Peroxidase 56 (PER56).